We begin with the raw amino-acid sequence, 319 residues long: Acetyl-coenzyme A carboxylase carboxyl transferase subunit alpha (319 aa).

The CoA carboxyltransferase C-terminal domain occupies 35–296; that stretch reads NIDEEVQRLR…KTQLLADLED (262 aa).

The protein belongs to the AccA family. Acetyl-CoA carboxylase is a heterohexamer composed of biotin carboxyl carrier protein (AccB), biotin carboxylase (AccC) and two subunits each of ACCase subunit alpha (AccA) and ACCase subunit beta (AccD).

The protein resides in the cytoplasm. It catalyses the reaction N(6)-carboxybiotinyl-L-lysyl-[protein] + acetyl-CoA = N(6)-biotinyl-L-lysyl-[protein] + malonyl-CoA. It functions in the pathway lipid metabolism; malonyl-CoA biosynthesis; malonyl-CoA from acetyl-CoA: step 1/1. Component of the acetyl coenzyme A carboxylase (ACC) complex. First, biotin carboxylase catalyzes the carboxylation of biotin on its carrier protein (BCCP) and then the CO(2) group is transferred by the carboxyltransferase to acetyl-CoA to form malonyl-CoA. This Edwardsiella ictaluri (strain 93-146) protein is Acetyl-coenzyme A carboxylase carboxyl transferase subunit alpha.